The sequence spans 43 residues: Protein PsbN (43 aa).

The helical transmembrane segment at 7–27 (ITIFLSCFLVGVTGYALYTAF) threads the bilayer.

Belongs to the PsbN family.

The protein localises to the plastid. Its subcellular location is the chloroplast thylakoid membrane. In terms of biological role, may play a role in photosystem I and II biogenesis. The polypeptide is Protein PsbN (Klebsormidium bilatum (Filamentous green alga)).